The following is a 346-amino-acid chain: Dihydroorotase (346 aa).

Residues His14 and His16 each contribute to the Zn(2+) site. Substrate is bound by residues 16 to 18 (HLR) and Asn42. Residues Lys100, His137, and His175 each coordinate Zn(2+). Position 100 is an N6-carboxylysine (Lys100). Residue His137 participates in substrate binding. Substrate is bound at residue Leu220. Asp248 is a Zn(2+) binding site. The active site involves Asp248. 2 residues coordinate substrate: His252 and Ala264.

Belongs to the metallo-dependent hydrolases superfamily. DHOase family. Class II DHOase subfamily. As to quaternary structure, homodimer. It depends on Zn(2+) as a cofactor.

It carries out the reaction (S)-dihydroorotate + H2O = N-carbamoyl-L-aspartate + H(+). Its pathway is pyrimidine metabolism; UMP biosynthesis via de novo pathway; (S)-dihydroorotate from bicarbonate: step 3/3. Its function is as follows. Catalyzes the reversible cyclization of carbamoyl aspartate to dihydroorotate. This is Dihydroorotase from Ruegeria sp. (strain TM1040) (Silicibacter sp.).